Here is a 142-residue protein sequence, read N- to C-terminus: Hemoglobin subunit pi (142 aa).

A Globin domain is found at A2 to R142. H59 and H88 together coordinate heme b.

This sequence belongs to the globin family.

Functionally, the pi' chain is the counterpart of the alpha chain in the major early embryonic hemoglobin P. The polypeptide is Hemoglobin subunit pi (Gallus gallus (Chicken)).